Here is a 199-residue protein sequence, read N- to C-terminus: MTQAAEADGAVKVVGDDITNNLSLVRDEVADTAAKVDPEQVAVLARQIVQPGRVFVAGAGRSGLVLRMAAMRLMHFGLTVHVAGDTTTPAISAGDLLLVASGSGTTSGVVKSAETAKKAGARIAAFTTNPDSPLAGLADAVVIIPAAQKTDHGSHISRQYAGSLFEQVLFVVTEAVFQSLWDHTEVEAEELWTRHANLE.

The SIS domain occupies 44 to 186 (LARQIVQPGR…FQSLWDHTEV (143 aa)). Residues serine 62 and 101-106 (SGSGTT) contribute to the substrate site. The Proton acceptor role is filled by glutamate 166.

The protein belongs to the SIS family. PHI subfamily.

The enzyme catalyses D-arabino-hex-3-ulose 6-phosphate = beta-D-fructose 6-phosphate. It participates in one-carbon metabolism; formaldehyde assimilation via RuMP pathway; D-fructose 6-phosphate from D-ribulose 5-phosphate and formaldehyde: step 2/2. Its function is as follows. Catalyzes the isomerization between 3-hexulose 6-phosphate and fructose 6-phosphate. The sequence is that of 3-hexulose-6-phosphate isomerase (rmpB) from Mycobacterium gastri.